Reading from the N-terminus, the 324-residue chain is Zinc transporter ZIP1 (324 aa).

Residues 1 to 30 lie on the Extracellular side of the membrane; that stretch reads MGPWGEPELLVWRPEAAASEAPVPMGLEVK. A helical membrane pass occupies residues 31 to 51; sequence LGALVLLLVLTLICSLVPVCV. Residues 52–68 lie on the Cytoplasmic side of the membrane; the sequence is LRRPGANPEASASRQKA. A helical transmembrane segment spans residues 69–89; the sequence is LSLVSCFAGGVFLATCLLDLL. The Extracellular portion of the chain corresponds to 90-104; it reads PDYLGAIDEALAALH. Residues 105-125 form a helical membrane-spanning segment; that stretch reads VTLQFPLQEFILAMGFFLVLV. Topologically, residues 126–179 are cytoplasmic; the sequence is MEQITLAYKEQSGPPPREETRALLGTVNGGPQHWHDGLGVPQAGGASSAPSALR. The chain crosses the membrane as a helical span at residues 180–200; it reads ACVLVFSLALHSVFEGLAVGL. The Extracellular portion of the chain corresponds to 201 to 206; it reads QRDQAR. A helical membrane pass occupies residues 207-227; it reads AMELCLALLLHKGILAVSLSL. The Cytoplasmic segment spans residues 228 to 237; that stretch reads RLLQSHLRAQ. The chain crosses the membrane as a helical span at residues 238-258; that stretch reads VVAGCGILFSCMTPLGIGLGT. The Extracellular portion of the chain corresponds to 259–272; it reads ALAESAGPLHQLAQ. A helical membrane pass occupies residues 273–293; that stretch reads SVLEGMAAGTFLYITFLEILP. Topologically, residues 294 to 303 are cytoplasmic; sequence QELATSEQRI. The helical transmembrane segment at 304-324 threads the bilayer; that stretch reads LKVILLLAGFALLTGLLFIQI.

It belongs to the ZIP transporter (TC 2.A.5) family.

It localises to the cell membrane. The protein resides in the endoplasmic reticulum membrane. It carries out the reaction Zn(2+)(in) = Zn(2+)(out). Transporter for the divalent cation Zn(2+). Mediates the influx of Zn(2+) into cells from extracellular space. The sequence is that of Zinc transporter ZIP1 (SLC39A1) from Bos taurus (Bovine).